Consider the following 279-residue polypeptide: NH(3)-dependent NAD(+) synthetase (279 aa).

40–47 contributes to the ATP binding site; it reads GLSGGIDS. Position 46 (aspartate 46) interacts with Mg(2+). Arginine 122 provides a ligand contact to deamido-NAD(+). Threonine 142 provides a ligand contact to ATP. Glutamate 147 serves as a coordination point for Mg(2+). Deamido-NAD(+)-binding residues include lysine 155 and aspartate 162. The ATP site is built by lysine 171 and serine 193. A deamido-NAD(+)-binding site is contributed by 253-254; sequence HK.

This sequence belongs to the NAD synthetase family. Homodimer.

The catalysed reaction is deamido-NAD(+) + NH4(+) + ATP = AMP + diphosphate + NAD(+) + H(+). It functions in the pathway cofactor biosynthesis; NAD(+) biosynthesis; NAD(+) from deamido-NAD(+) (ammonia route): step 1/1. In terms of biological role, catalyzes the ATP-dependent amidation of deamido-NAD to form NAD. Uses ammonia as a nitrogen source. This is NH(3)-dependent NAD(+) synthetase from Sulfurisphaera tokodaii (strain DSM 16993 / JCM 10545 / NBRC 100140 / 7) (Sulfolobus tokodaii).